Here is a 969-residue protein sequence, read N- to C-terminus: Activity-dependent neuroprotective protein a (969 aa).

The segment at 74-97 adopts a C2H2-type 1 zinc-finger fold; it reads FCCSDCPFASKYFSAYKNHFRNVH. A C2H2-type 2; atypical zinc finger spans residues 107-129; the sequence is LNCSYCTYSGNKRTLETHVRLFH. C2H2-type zinc fingers lie at residues 169–192 and 221–244; these read YYCKKCTYRDRLYNVVRRHIYREH and IHCKSCHFTPRSYEALVQHVIEFH. The segment at 401–423 adopts a C2H2-type 5; atypical zinc-finger fold; the sequence is KICTICNELFPESAYSAHFEKEH. The C2H2-type 6; atypical zinc finger occupies 443–464; it reads SKCLYCNRYLPSDSLLNHMLVH. The C2H2-type 7 zinc finger occupies 466 to 489; that stretch reads LSCPHCHSTFHEVEKIVAHNRLAH. The segment at 583–608 adopts a C2H2-type 8; atypical zinc-finger fold; that stretch reads TLCPLCFTILKGPISDALAHHLRDSH. Residues 623 to 647 form a C2H2-type 9; atypical zinc finger; sequence YKCIHCLGVYTSNMTASTITLHLVH. Positions 659–689 are disordered; that stretch reads KPITTGLRSPGAGSLKRELVTPDPSDPKRRK. A DNA-binding region (homeobox) is located at residues 732–774; that stretch reads AYFNRHPYPSQREVEKLAASLWLWKSDVASHFGNHRRLCDRDF. A disordered region spans residues 911–949; that stretch reads DVRANRSSPRVGPKVLDGSVSSSSPDEATWSGNMSSEES. Residues 929–946 are compositionally biased toward polar residues; that stretch reads SVSSSSPDEATWSGNMSS.

In terms of assembly, interacts with catenin beta-1/ctnnb1.

It localises to the nucleus. Its function is as follows. May be involved in transcriptional regulation. Positively modulates wnt-beta-catenin/ctnnb1 signaling. Required for embryonic neurogenesis. Required for progression through late erythroid differentiation. The protein is Activity-dependent neuroprotective protein a of Danio rerio (Zebrafish).